Here is an 89-residue protein sequence, read N- to C-terminus: Small ribosomal subunit protein uS15 (89 aa).

The protein belongs to the universal ribosomal protein uS15 family. As to quaternary structure, part of the 30S ribosomal subunit. Forms a bridge to the 50S subunit in the 70S ribosome, contacting the 23S rRNA.

Functionally, one of the primary rRNA binding proteins, it binds directly to 16S rRNA where it helps nucleate assembly of the platform of the 30S subunit by binding and bridging several RNA helices of the 16S rRNA. Forms an intersubunit bridge (bridge B4) with the 23S rRNA of the 50S subunit in the ribosome. The protein is Small ribosomal subunit protein uS15 of Corynebacterium urealyticum (strain ATCC 43042 / DSM 7109).